The sequence spans 364 residues: CLIP domain-containing serine protease B15 (364 aa).

Residues 1-19 form the signal peptide; the sequence is MRWLVCLIVSWCSLVPLGA. One can recognise a Clip domain in the interval 30-89; sequence PCQTPSGTAGTCEPVKNCSYVRKILKSPDFSHYDTTYLDTLKCGDLMVPMRKKPIPLLCC. Cystine bridges form between cysteine 31-cysteine 88, cysteine 41-cysteine 72, and cysteine 47-cysteine 89. A glycan (N-linked (GlcNAc...) asparagine) is linked at asparagine 46. A Peptidase S1 domain is found at 107–359; that stretch reads IYFGEETERG…YLDWMETVMF (253 aa). N-linked (GlcNAc...) asparagine glycosylation is present at asparagine 131. The cysteines at positions 137 and 153 are disulfide-linked. Histidine 152 functions as the Charge relay system in the catalytic mechanism. Asparagine 171, asparagine 177, and asparagine 206 each carry an N-linked (GlcNAc...) asparagine glycan. Aspartate 212 serves as the catalytic Charge relay system. Cysteines 279 and 296 form a disulfide. 2 N-linked (GlcNAc...) asparagine glycosylation sites follow: asparagine 287 and asparagine 301. A disulfide bridge links cysteine 306 with cysteine 335. The Charge relay system role is filled by serine 310.

This sequence belongs to the peptidase S1 family. CLIP subfamily. Post-translationally, N-glycosylated. In terms of processing, proteolytically cleaved. In terms of tissue distribution, expressed by a subpopulation of hemocytes.

It localises to the secreted. Its function is as follows. Serine protease. Plays a role in innate immunity against infections by parasite P.berghei and by Gram-negative bacteria such as E.coli. In response to P.berghei infection, contributes to the clearing of parasite ookinetes independent of melanization, an innate immune response which consists in the deposition of melanin pigments on invading pathogens and parasites. The polypeptide is CLIP domain-containing serine protease B15 (Anopheles gambiae (African malaria mosquito)).